Consider the following 942-residue polypeptide: MKSPAPAHMWNLVLFLPSLLAVLPTTTAEKNGIDIYSLTVDSRVSSRFAHTVVTSRVVNRADAVQEATFQVELPRKAFITNFSMIIDGVTYPGVVKEKAEAQKQYSAAVGRGESAGIVKTTGRQTEKFEVSVNVAPGSKITFELIYQELLQRRLGMYELLLKVRPQQLVKHLQMDIYIFEPQGISILETESTFMTPELANALTTSQNKTKAHIRFKPTLSQQQKSQSEQDTVLNGDFIVRYDVNRSDSGGSIQIEEGYFVHHFAPENLPTMSKNVIFVIDKSGSMSGKKIQQTREALVKILKDLSPQDQFNLIEFSGEANQWKQSLVQATEENLNKAVNYASRIRAHGGTNINNAVLLAVELLDRSNQAELLPSKSVSLIILLTDGDPTVGETNPTIIQNNVREAINGQYSLFCLGFGFDVNYPFLEKMALDNGGLARRIYEDSDSALQLQDFYHEVANPLLSSVAFEYPSDAVEEVTRYKFQHHFKGSEMVVAGKLQDQGPDVLLAKVSGQMHMQNITFQTEASVAQQEKEFKSPKYIFHNFMERLWALLTIQQQLEQRISASGAELEALEAQVLNLSLKYNFVTPLTHMVVTKPEGQEQFQVAEKPVEVGDGMQRLPLAAQAHPFRPPVRGSKLMTVLKGSRSQIPRLGDAVRASRQYIPPGFPGPPGPPGFPAPPGPPGFPAPPGPPLASGSDFSLQPSYERMLSLPSVAAQYPADPHLVVTEKSKESTIPEESPNPDHPQVPTITLPLPGSSVDQLCVDILHSEKPMKLFVDPSQGLEVTGKYENTGFSWLEVTIQKPHLQVHATPERLVVTRGRKNTEYKWKKTLFSVLPGLKMTMNMMGLLQLSGPDKVTIGLLSLDDPQRGLMLLLNDTQHFSNNVKGELGQFYRDIVWEPPVEPDNTKRTVKVQGVDYLATRELKLSYQEGFPGAEISCWTVEI.

A signal peptide spans 1-28 (MKSPAPAHMWNLVLFLPSLLAVLPTTTA). In terms of domain architecture, VIT spans 29 to 148 (EKNGIDIYSL…KITFELIYQE (120 aa)). Asn81 is a glycosylation site (N-linked (GlcNAc...) asparagine). The VWFA domain occupies 274–457 (NVIFVIDKSG…LQLQDFYHEV (184 aa)). 2 N-linked (GlcNAc...) asparagine glycosylation sites follow: Asn517 and Asn577. A coiled-coil region spans residues 552–586 (TIQQQLEQRISASGAELEALEAQVLNLSLKYNFVT). 2 disordered regions span residues 658–698 (RQYI…SDFS) and 726–745 (EKSK…HPQV). Positions 663–690 (PGFPGPPGPPGFPAPPGPPGFPAPPGPP) are enriched in pro residues. Thr732 carries an O-linked (GalNAc...) threonine glycan. Residues Cys761 and Cys937 are joined by a disulfide bond. The N-linked (GlcNAc...) asparagine glycan is linked to Asn874.

It belongs to the ITIH family. As to quaternary structure, interacts (via C-terminus) with DNAJC1 (via SANT 2 domain). May be O-glycosylated. N-glycosylated. As to expression, highly expressed in liver. Weak expression in lung and heart.

It is found in the secreted. In terms of biological role, type II acute-phase protein (APP) involved in inflammatory responses to trauma. May also play a role in liver development or regeneration. This is Inter alpha-trypsin inhibitor, heavy chain 4 (Itih4) from Mus musculus (Mouse).